The following is a 216-amino-acid chain: Transmembrane emp24 domain-containing protein eca (216 aa).

The N-terminal stretch at 1–20 (MRDQFISLALMLCILHSACG) is a signal peptide. Over 21 to 182 (LYFHISETER…FRHTSESTNS (162 aa)) the chain is Lumenal. The GOLD domain maps to 30 to 126 (RKCFIEEVPD…QLRVHLDIQV (97 aa)). The stretch at 134-164 (ANVAQKEKLTELQLRIRQLLDQVEQITKEQN) forms a coiled coil. A helical membrane pass occupies residues 183 to 203 (RVLWWSLAQTVVLVCMGFWQM). The Cytoplasmic segment spans residues 204–216 (RHLKSFFEAKKLV). The Prevents secretion from ER motif lies at 213–216 (KKLV).

The protein belongs to the EMP24/GP25L family.

It localises to the endoplasmic reticulum membrane. Functionally, eca and bai are essential, though not redundant, for dorsoventral patterning of the embryo. Specifically required during early embryogenesis for the activity of maternal tkv, while the zygotic tkv is not affected. Involved in Golgi organization. This Drosophila erecta (Fruit fly) protein is Transmembrane emp24 domain-containing protein eca.